An 83-amino-acid chain; its full sequence is Small ribosomal subunit protein bS16 (83 aa).

Belongs to the bacterial ribosomal protein bS16 family.

This Ectopseudomonas mendocina (strain ymp) (Pseudomonas mendocina) protein is Small ribosomal subunit protein bS16.